The primary structure comprises 453 residues: Ubiquitin-associated protein 1 (453 aa).

The region spanning 19–65 (LDDVPFKLNEKFRCPSKVGLPIGFCLSDCNAILSDLQYDFNLERRTV) is the UMA domain. A compositionally biased stretch (basic and acidic residues) spans 83–93 (EAIRTDSESER). 3 disordered regions span residues 83–119 (EAIRTDSESERQAASQDAEVGLVGGKKARPSDEQDIV), 189–223 (LQSQPQSSVSPPQLPPAEHRPVSPSTTPPLQAKTG), and 260–335 (FPKL…AGTT). Residues 189 to 199 (LQSQPQSSVSP) show a composition bias toward low complexity. Polar residues predominate over residues 285–328 (NLSNGTPPSLQRTASNNNTTLPQEQPVFAQNGTPKQSNPVTVTS). UBA domains lie at 340–381 (SPSE…LFTH) and 403–449 (GSEE…LMTR).

Component of an ESCRT-I complex (endosomal sorting complex required for transport I).

It localises to the cytoplasm. It is found in the cytosol. The protein localises to the endosome. Functionally, component of the ESCRT-I complex, a regulator of vesicular trafficking process. Binds to ubiquitinated cargo proteins and is required for the sorting of endocytic ubiquitinated cargos into multivesicular bodies (MVBs). The sequence is that of Ubiquitin-associated protein 1 from Danio rerio (Zebrafish).